Reading from the N-terminus, the 328-residue chain is Malate dehydrogenase (328 aa).

11 to 17 (GAAGQIG) lines the NAD(+) pocket. Substrate-binding residues include R94 and R100. Residues N107, Q114, and 131–133 (VGN) each bind NAD(+). Residues N133 and R164 each contribute to the substrate site. H189 serves as the catalytic Proton acceptor.

The protein belongs to the LDH/MDH superfamily. MDH type 2 family.

It catalyses the reaction (S)-malate + NAD(+) = oxaloacetate + NADH + H(+). Functionally, catalyzes the reversible oxidation of malate to oxaloacetate. In Xanthomonas euvesicatoria pv. vesicatoria (strain 85-10) (Xanthomonas campestris pv. vesicatoria), this protein is Malate dehydrogenase.